The sequence spans 272 residues: Dermonecrotic toxin SpeSicTox-betaIB1b (272 aa).

Histidine 5 is a catalytic residue. Residues glutamate 25 and aspartate 27 each contribute to the Mg(2+) site. The Nucleophile role is filled by histidine 41. 2 disulfide bridges follow: cysteine 45–cysteine 51 and cysteine 47–cysteine 191. Position 85 (aspartate 85) interacts with Mg(2+).

It belongs to the arthropod phospholipase D family. Class II subfamily. It depends on Mg(2+) as a cofactor. In terms of tissue distribution, expressed by the venom gland.

It is found in the secreted. It catalyses the reaction an N-(acyl)-sphingosylphosphocholine = an N-(acyl)-sphingosyl-1,3-cyclic phosphate + choline. The enzyme catalyses an N-(acyl)-sphingosylphosphoethanolamine = an N-(acyl)-sphingosyl-1,3-cyclic phosphate + ethanolamine. It carries out the reaction a 1-acyl-sn-glycero-3-phosphocholine = a 1-acyl-sn-glycero-2,3-cyclic phosphate + choline. The catalysed reaction is a 1-acyl-sn-glycero-3-phosphoethanolamine = a 1-acyl-sn-glycero-2,3-cyclic phosphate + ethanolamine. Its function is as follows. Dermonecrotic toxins cleave the phosphodiester linkage between the phosphate and headgroup of certain phospholipids (sphingolipid and lysolipid substrates), forming an alcohol (often choline) and a cyclic phosphate. This toxin acts on sphingomyelin (SM). It may also act on ceramide phosphoethanolamine (CPE), lysophosphatidylcholine (LPC) and lysophosphatidylethanolamine (LPE), but not on lysophosphatidylserine (LPS), and lysophosphatidylglycerol (LPG). It acts by transphosphatidylation, releasing exclusively cyclic phosphate products as second products. Induces dermonecrosis, hemolysis, increased vascular permeability, edema, inflammatory response, and platelet aggregation. This is Dermonecrotic toxin SpeSicTox-betaIB1b from Sicarius peruensis (Six-eyed sand spider).